We begin with the raw amino-acid sequence, 449 residues long: 8-oxoguanine deaminase (449 aa).

His64 and His66 together coordinate Zn(2+). Gln69 is a substrate binding site. Residue His232 coordinates Zn(2+). The substrate site is built by Glu235 and His269. Residues His269 and Asp320 each coordinate Zn(2+).

Belongs to the metallo-dependent hydrolases superfamily. ATZ/TRZ family. In terms of assembly, homodimer. Zn(2+) is required as a cofactor.

The catalysed reaction is 8-oxoguanine + H2O + H(+) = urate + NH4(+). It functions in the pathway purine metabolism. Functionally, specifically deaminates 8-Oxoguanine (8-oxoG) to uric acid. 8-oxoG is formed via the oxidation of guanine within DNA by reactive oxygen species and leads, if uncorrected, to the incorporation of 8-oxoG:A mismatches and eventually to G:C to T:A transversions. This is 8-oxoguanine deaminase from Pseudomonas aeruginosa (strain ATCC 15692 / DSM 22644 / CIP 104116 / JCM 14847 / LMG 12228 / 1C / PRS 101 / PAO1).